A 482-amino-acid chain; its full sequence is Pyruvate kinase (482 aa).

R37 lines the substrate pocket. The K(+) site is built by N39, S41, and D71. 39–42 contacts ATP; sequence NFSH. ATP is bound by residues R78 and K160. A Mg(2+)-binding site is contributed by E222. 3 residues coordinate substrate: G245, D246, and T278. D246 lines the Mg(2+) pocket.

This sequence belongs to the pyruvate kinase family. Homotetramer. It depends on Mg(2+) as a cofactor. Requires K(+) as cofactor.

It carries out the reaction pyruvate + ATP = phosphoenolpyruvate + ADP + H(+). It participates in carbohydrate degradation; glycolysis; pyruvate from D-glyceraldehyde 3-phosphate: step 5/5. The chain is Pyruvate kinase (ttuE) from Agrobacterium vitis (Rhizobium vitis).